A 488-amino-acid chain; its full sequence is Katanin p60 ATPase-containing subunit A-like 1 (488 aa).

The residue at position 1 (methionine 1) is an N-acetylmethionine. A disordered region spans residues 128 to 179; that stretch reads GAGARGLVGRAHQISKSDKAASRDKDYRARGRDDKARKNMQDGASDGEIPKF. A compositionally biased stretch (basic and acidic residues) spans 142-167; that stretch reads SKSDKAASRDKDYRARGRDDKARKNM. Phosphoserine is present on serine 172. Residue 246-253 participates in ATP binding; the sequence is GPPGTGKT.

This sequence belongs to the AAA ATPase family. Katanin p60 subunit A1 subfamily. A-like 1 sub-subfamily. In terms of assembly, interacts with KATNB1 and KATNBL1.

It is found in the cytoplasm. The protein resides in the cytoskeleton. It localises to the spindle pole. Its subcellular location is the spindle. It carries out the reaction n ATP + n H2O + a microtubule = n ADP + n phosphate + (n+1) alpha/beta tubulin heterodimers.. Its function is as follows. Regulates microtubule dynamics in Sertoli cells, a process that is essential for spermiogenesis and male fertility. Severs microtubules in an ATP-dependent manner, promoting rapid reorganization of cellular microtubule arrays. Has microtubule-severing activity in vitro. In Rattus norvegicus (Rat), this protein is Katanin p60 ATPase-containing subunit A-like 1 (Katnal1).